The following is a 220-amino-acid chain: Putative NAD(P)H nitroreductase (220 aa).

Residue 155–160 coordinates NAD(+); sequence GASALG.

The protein belongs to the nitroreductase family. It depends on FMN as a cofactor.

This is Putative NAD(P)H nitroreductase from Haemophilus influenzae (strain ATCC 51907 / DSM 11121 / KW20 / Rd).